The chain runs to 1053 residues: Zinc finger and BTB domain-containing protein 11 (1053 aa).

Positions 141–156 are enriched in acidic residues; that stretch reads LDLESGEESNESEDDL. The tract at residues 141–173 is disordered; the sequence is LDLESGEESNESEDDLSNFTSSPTTASKPAKKK. The segment covering 157–168 has biased composition (low complexity); it reads SNFTSSPTTASK. One can recognise a BTB domain in the interval 214–282; sequence CDVTLLIEGE…AYTSVLSFDF (69 aa). A disordered region spans residues 546–566; it reads LVQRGKKMKQPKRDAKENTEE. Basic and acidic residues predominate over residues 556 to 566; that stretch reads PKRDAKENTEE. C2H2-type zinc fingers lie at residues 569–591 and 597–619; these read HKCG…KLKH and YKCP…LIRH. Residues 619 to 643 are disordered; the sequence is HTRKDAPSSSSSNSTSNEASGTSSE. Residues 626-642 show a composition bias toward low complexity; it reads SSSSSNSTSNEASGTSS. 10 consecutive C2H2-type zinc fingers follow at residues 651–673, 679–701, 707–729, 735–757, 766–788, 794–816, 822–846, 858–880, 886–908, and 914–937; these read FICS…MLKH, HACQ…QSLH, FQCE…MSIH, YLCS…FKKH, YHCT…MNKH, FQCQ…VKSH, YRCN…KATH, RVCE…MNNH, FECL…VRTH, and YVCP…TKFH. Lys-1043 participates in a covalent cross-link: Glycyl lysine isopeptide (Lys-Gly) (interchain with G-Cter in SUMO2). A Phosphoserine modification is found at Ser-1050.

Its subcellular location is the nucleus. The protein localises to the nucleolus. In terms of biological role, may be involved in transcriptional regulation. The protein is Zinc finger and BTB domain-containing protein 11 of Homo sapiens (Human).